The sequence spans 386 residues: Aspartate carbamoyltransferase 1, chloroplastic (386 aa).

The transit peptide at 1-39 (MTVASMLSSNSMNVGVSNPKMSSKTSACCLLNRPWPSSC) directs the protein to the chloroplast. Residues Arg-132 and Thr-133 each coordinate carbamoyl phosphate. UMP-binding residues include Arg-132 and Thr-133. Lys-162 is a binding site for L-aspartate. Positions 183, 211, and 214 each coordinate carbamoyl phosphate. UMP is bound by residues Arg-183 and His-211. Residues Arg-244 and Arg-306 each contribute to the UMP site. Residues Arg-244 and Arg-306 each coordinate L-aspartate. Carbamoyl phosphate is bound by residues Leu-346 and Pro-347.

Belongs to the aspartate/ornithine carbamoyltransferase superfamily. ATCase family. Homotrimer.

It localises to the plastid. It is found in the chloroplast. It catalyses the reaction carbamoyl phosphate + L-aspartate = N-carbamoyl-L-aspartate + phosphate + H(+). Its pathway is pyrimidine metabolism; UMP biosynthesis via de novo pathway; (S)-dihydroorotate from bicarbonate: step 2/3. With respect to regulation, feedback inhibited by UMP. Catalyzes the condensation of carbamoyl phosphate and aspartate to form carbamoyl aspartate and inorganic phosphate, the committed step in the de novo pyrimidine nucleotide biosynthesis pathway. This chain is Aspartate carbamoyltransferase 1, chloroplastic (PYRB1), found in Pisum sativum (Garden pea).